A 196-amino-acid polypeptide reads, in one-letter code: RNA-binding protein with multiple splicing 2 (196 aa).

In terms of domain architecture, RRM spans 20-97; it reads RTLFVSGLPI…QTLRLEFAKA (78 aa). The segment at 30–40 is important for homodimerization; that stretch reads DIKPRELYLLF.

In terms of assembly, homodimer. As to expression, expressed in developing heart, pronephros, retina and epiphysis. In adult, high expression in heart, moderate in kidney, undetectable in liver, lung and skeletal muscle.

The protein localises to the cytoplasm. It localises to the nucleus. It is found in the stress granule. Its function is as follows. RNA-binding protein involved in the regulation of smooth muscle cell differentiation and proliferation in the gastrointestinal system. Binds NOG mRNA, the major inhibitor of the bone morphogenetic protein (BMP) pathway. Mediates an increase of NOG mRNA levels, thereby contributing to the negative regulation of BMP signaling pathway and promoting reversible dedifferentiation and proliferation of smooth muscle cells. Acts as a pre-mRNA alternative splicing regulator. Mediates ACTN1 and FLNB alternative splicing. Likely binds to mRNA tandem CAC trinucleotide or CA dinucleotide motifs. The sequence is that of RNA-binding protein with multiple splicing 2 from Xenopus laevis (African clawed frog).